Here is a 119-residue protein sequence, read N- to C-terminus: Chorion class CA protein ERA.3 (119 aa).

The signal sequence occupies residues 1–21; the sequence is MSYFVVFAICIQACLFHNVYS. A left arm region spans residues 22–55; the sequence is QCLGRVGPGGPPLGPYGGPLGGPGYGPVGYGGCG. The central domain stretch occupies residues 56-103; that stretch reads GYGGSGIGNVAVAGELPVVGSSAVMGQVPVIGAVEFAGPACAVGSVSI. The segment at 104–119 is right arm; it reads SGACGPTCGCGGLPYY.

It belongs to the chorion protein family.

Its function is as follows. This protein is one of many from the eggshell of the silk moth. This Bombyx mori (Silk moth) protein is Chorion class CA protein ERA.3 (ERA.3).